The following is a 337-amino-acid chain: HTH-type transcriptional repressor PurR (337 aa).

The HTH lacI-type domain maps to 2-56 (ATIKDVAKLAAVSTTTVSHVINKTRFVAEATQKRVWEAVEELNYAPSAVARSLKC). The H-T-H motif DNA-binding region spans 4 to 23 (IKDVAKLAAVSTTTVSHVIN). The DNA-binding element occupies 48–56 (SAVARSLKC). Positions 73, 189, 191, 220, and 276 each coordinate hypoxanthine.

As to quaternary structure, homodimer.

It functions in the pathway purine metabolism; purine nucleotide biosynthesis [regulation]. Its function is as follows. Is the main repressor of the genes involved in the de novo synthesis of purine nucleotides, regulating purB, purC, purEK, purF, purHD, purL, purMN and guaBA expression. PurR is allosterically activated to bind its cognate DNA by binding the purine corepressors, hypoxanthine or guanine, thereby effecting transcription repression. This Aliivibrio fischeri (strain ATCC 700601 / ES114) (Vibrio fischeri) protein is HTH-type transcriptional repressor PurR.